Reading from the N-terminus, the 448-residue chain is Immunoglobulin G-binding protein G (448 aa).

The N-terminal stretch at 1 to 33 (MEKEKKVKYFLRKSAFGLASVSAAFLVGSTVFA) is a signal peptide. Tandem repeats lie at residues 104 to 140 (LAKA…IKDL), 179 to 215 (LAEA…VKEL), 228 to 282 (TYKL…TVTE), and 298 to 352 (TYKL…TVTE). The segment at 104–215 (LAKAKADALK…AKTVEGVKEL (112 aa)) is 2 X 37 AA repeats. The 2 X 55 AA repeats stretch occupies residues 228-352 (TYKLILNGKT…DATKTFTVTE (125 aa)). The interval 358 to 422 (PGDAPTEPEK…TLPTTGEGSN (65 aa)) is disordered. Residues 384-412 (AKDDAKKDDTKKEDAKKPEAKKDDAKKAE) show a composition bias toward basic and acidic residues. The tract at residues 386–410 (DDAKKDDTKKEDAKKPEAKKDDAKK) is 5 X 5 AA repeats of [DE]-D-A-K-K. Positions 414-418 (LPTTG) match the LPXTG sorting signal motif. A Pentaglycyl murein peptidoglycan amidated threonine modification is found at Thr417. Positions 418–448 (GEGSNPFFTAAALAVMAGAGALAVASKRKED) are cleaved as a propeptide — removed by sortase.

It is found in the secreted. It localises to the cell wall. Functionally, binds to the constant Fc region of IgG with high affinity. The sequence is that of Immunoglobulin G-binding protein G (spg) from Streptococcus sp. group G.